We begin with the raw amino-acid sequence, 519 residues long: Histidine--tRNA ligase (519 aa).

The protein belongs to the class-II aminoacyl-tRNA synthetase family. As to quaternary structure, homodimer.

It is found in the cytoplasm. The catalysed reaction is tRNA(His) + L-histidine + ATP = L-histidyl-tRNA(His) + AMP + diphosphate + H(+). The sequence is that of Histidine--tRNA ligase from Roseobacter denitrificans (strain ATCC 33942 / OCh 114) (Erythrobacter sp. (strain OCh 114)).